The sequence spans 346 residues: Glucose-6-phosphatase 3 (346 aa).

At 1–24 (MESTLGAGIVIAEALQNQLAWLEN) the chain is on the lumenal side. A helical transmembrane segment spans residues 25–45 (VWLWITFLGDPKILFLFYFPA). Topologically, residues 46–54 (AYYASRRVG) are cytoplasmic. A helical transmembrane segment spans residues 55 to 75 (IAVLWISLITEWLNLIFKWFL). Topologically, residues 76-114 (FGDRPFWWVHESGYYSQAPAQVHQFPSSCETGPGSPSGH) are lumenal. Arginine 79 serves as a coordination point for substrate. Histidine 114 (proton donor) is an active-site residue. The helical transmembrane segment at 115–135 (CMITGAALWPIMTALSSQVAT) threads the bilayer. Residues 136-146 (RARSRWVRVMP) are Cytoplasmic-facing. The helical transmembrane segment at 147–164 (SLAYCTFLLAVGLSRIFI) threads the bilayer. Arginine 161 is a substrate binding site. At 165–169 (LAHFP) the chain is on the lumenal side. Histidine 167 acts as the Nucleophile in catalysis. The chain crosses the membrane as a helical span at residues 170 to 186 (HQVLAGLITGAVLGWLM). Topologically, residues 187–197 (TPRVPMERELS) are cytoplasmic. A helical membrane pass occupies residues 198 to 218 (FYGLTALALMLGTSLIYWTLF). At 219–254 (TLGLDLSWSISLAFKWCERPEWIHVDSRPFASLSRD) the chain is on the lumenal side. The helical transmembrane segment at 255–273 (SGAALGLGIALHSPCYAQV) threads the bilayer. At 274–283 (RRAQLGNGQK) the chain is on the cytoplasmic side. A helical membrane pass occupies residues 284–304 (IACLVLAMGLLGPLDWLGHPP). Residues 305 to 307 (QIS) are Lumenal-facing. The helical transmembrane segment at 308-328 (LFYIFNFLKYTLWPCLVLALV) threads the bilayer. Over 329–346 (PWAVHMFSAQEAPPIHSS) the chain is Cytoplasmic.

It belongs to the glucose-6-phosphatase family. As to expression, ubiquitously expressed. Highly expressed in skeletal muscle, at intermediate levels in heart, brain, placenta, kidney, colon, thymus, spleen and pancreas. Also detected in testis, prostate, ovary, liver, lung, small intestine and peripheral blood lymphocytes.

The protein resides in the endoplasmic reticulum membrane. It catalyses the reaction D-glucose 6-phosphate + H2O = D-glucose + phosphate. The protein operates within carbohydrate biosynthesis; gluconeogenesis. Inhibited by vanadate. Hydrolyzes glucose-6-phosphate to glucose in the endoplasmic reticulum. May form with the glucose-6-phosphate transporter (SLC37A4/G6PT) a ubiquitously expressed complex responsible for glucose production through glycogenolysis and gluconeogenesis. Probably required for normal neutrophil function. This is Glucose-6-phosphatase 3 (G6PC3) from Homo sapiens (Human).